A 608-amino-acid polypeptide reads, in one-letter code: ATP-citrate synthase beta chain protein 1 (608 aa).

ATP-binding positions include 214-234 and 265-291; these read ILRF…ELGG and FKSE…KNQA. Residue glutamate 231 participates in Mg(2+) binding. Catalysis depends on histidine 273, which acts as the Tele-phosphohistidine intermediate. 292-302 contacts CoA; sequence LQDAGATVPTS.

Belongs to the succinate/malate CoA ligase alpha subunit family. As to quaternary structure, heterooctamer of 4 alpha and 4 beta chains.

It localises to the cytoplasm. It is found in the cytosol. The catalysed reaction is oxaloacetate + acetyl-CoA + ADP + phosphate = citrate + ATP + CoA. ATP citrate-lyase is the primary enzyme responsible for the synthesis of cytosolic acetyl-CoA, used for the elongation of fatty acids and biosynthesis of isoprenoids, flavonoids and malonated derivatives. May supply substrate to the cytosolic acetyl-CoA carboxylase, which generates the malonyl-CoA used for the synthesis of a multitude of compounds, including very long chain fatty acids and flavonoids. Required for normal growth and development and elongation of C18 fatty acids to C20 to C24 fatty acids in seeds. In contrast to all known animal ACL enzymes having a homomeric structure, plant ACLs are composed of alpha and beta chains. The polypeptide is ATP-citrate synthase beta chain protein 1 (ACLB-1) (Arabidopsis thaliana (Mouse-ear cress)).